A 294-amino-acid chain; its full sequence is Phosphatidylserine decarboxylase proenzyme (294 aa).

Active-site charge relay system; for autoendoproteolytic cleavage activity residues include D100, H157, and S261. S261 (schiff-base intermediate with substrate; via pyruvic acid; for decarboxylase activity) is an active-site residue. Position 261 is a pyruvic acid (Ser); by autocatalysis (S261).

This sequence belongs to the phosphatidylserine decarboxylase family. PSD-B subfamily. Prokaryotic type I sub-subfamily. In terms of assembly, heterodimer of a large membrane-associated beta subunit and a small pyruvoyl-containing alpha subunit. Pyruvate serves as cofactor. Is synthesized initially as an inactive proenzyme. Formation of the active enzyme involves a self-maturation process in which the active site pyruvoyl group is generated from an internal serine residue via an autocatalytic post-translational modification. Two non-identical subunits are generated from the proenzyme in this reaction, and the pyruvate is formed at the N-terminus of the alpha chain, which is derived from the carboxyl end of the proenzyme. The autoendoproteolytic cleavage occurs by a canonical serine protease mechanism, in which the side chain hydroxyl group of the serine supplies its oxygen atom to form the C-terminus of the beta chain, while the remainder of the serine residue undergoes an oxidative deamination to produce ammonia and the pyruvoyl prosthetic group on the alpha chain. During this reaction, the Ser that is part of the protease active site of the proenzyme becomes the pyruvoyl prosthetic group, which constitutes an essential element of the active site of the mature decarboxylase.

The protein resides in the cell membrane. The enzyme catalyses a 1,2-diacyl-sn-glycero-3-phospho-L-serine + H(+) = a 1,2-diacyl-sn-glycero-3-phosphoethanolamine + CO2. The protein operates within phospholipid metabolism; phosphatidylethanolamine biosynthesis; phosphatidylethanolamine from CDP-diacylglycerol: step 2/2. Functionally, catalyzes the formation of phosphatidylethanolamine (PtdEtn) from phosphatidylserine (PtdSer). The sequence is that of Phosphatidylserine decarboxylase proenzyme from Histophilus somni (strain 2336) (Haemophilus somnus).